The chain runs to 521 residues: Melanopsin (521 aa).

Residues 1-71 lie on the Extracellular side of the membrane; the sequence is MDSPSGPRVL…VDVPDHAHYT (71 aa). N-linked (GlcNAc...) asparagine glycans are attached at residues asparagine 30 and asparagine 34. Residues 72–92 form a helical membrane-spanning segment; the sequence is LGTVILLVGLTGMLGNLTVIY. Over 93 to 106 the chain is Cytoplasmic; it reads TFCRNRGLRTPANM. The helical transmembrane segment at 107 to 127 threads the bilayer; sequence FIINLAVSDFLMSVTQAPVFF. The Extracellular portion of the chain corresponds to 128-143; it reads ASSLYKKWLFGETGCE. A disulfide bond links cysteine 142 and cysteine 220. A helical membrane pass occupies residues 144-164; it reads FYAFCGAVFGITSMITLTAIA. The Cytoplasmic portion of the chain corresponds to 165-187; it reads MDRYLVITRPLATIGRGSKRRTA. Residues 188 to 208 form a helical membrane-spanning segment; that stretch reads LVLLGVWLYALAWSLPPFFGW. The Extracellular segment spans residues 209 to 237; that stretch reads SAYVPEGLLTSCSWDYMTFTPQVRAYTML. A helical transmembrane segment spans residues 238 to 258; sequence LFCFVFFLPLLIIIFCYIFIF. Residues 259–293 are Cytoplasmic-facing; it reads RAIRETGRACEGCGESPLRQRRQWQRLQSEWKMAK. The helical transmembrane segment at 294–314 threads the bilayer; it reads VALIVILLFVLSWAPYSTVAL. At 315–329 the chain is on the extracellular side; the sequence is VAFAGYSHILTPYMS. Residues 330–350 traverse the membrane as a helical segment; the sequence is SVPAVIAKASAIHNPIIYAIT. Residue lysine 337 is modified to N6-(retinylidene)lysine. The Cytoplasmic segment spans residues 351–521; sequence HPKYRVAIAQ…LEDDVTLRHL (171 aa). The segment at 445–486 is disordered; that stretch reads GELKASSSPQVQRSKTPKVPGPSTCRPMKGQGARPSSLRGDQ. The segment covering 449 to 458 has biased composition (polar residues); that stretch reads ASSSPQVQRS.

It belongs to the G-protein coupled receptor 1 family. Opsin subfamily. Expressed in the retinal pigment epithelium and ganglion cell layer (at protein level). Also expressed in amacrine cell layers of the retina. Weakly expressed in vibrissae, and tail. As to expression, observed with processes in the outer strata of inner plexiform layer (IPL) close to the inner nuclear layer (INL) or is found to be bistratified with processes located both in the inner (ON) or outer (OFF) layers of the IPL (at protein level). A second population of isoform 1 is identified in processes which are confined to the inner layer of the IPL near to the ganglion cell layer (GCL) (at protein level). In terms of tissue distribution, about 40 times more abundant than isoform 1 in the retina (at protein level). Isoform 2 is involved in processes localized to the outer IPL or is bistratified with processes in both the inner and outer layers of the IPL (at protein level). Isoform 2 is absent in the processes confined only to the inner layer of the IPL (at protein level).

The protein resides in the cell membrane. It localises to the cell projection. It is found in the axon. The protein localises to the dendrite. Its subcellular location is the perikaryon. Its function is as follows. Photoreceptor that binds cis-retinaldehydes. Contributes to pupillar reflex, photoentrainment and other non-image forming responses to light. May be involved in the optokinetic visual tracking response. May be involved in the regulation of retinal hyaloid vessel growth and regression. In Mus musculus (Mouse), this protein is Melanopsin (Opn4).